Consider the following 737-residue polypeptide: Polyribonucleotide nucleotidyltransferase (737 aa).

Positions 514 and 520 each coordinate Mg(2+). The KH domain maps to 580–639 (PRIITVKIPVDKIGEVIGPKGKMINQIQEDTGADITIEDDGTIYIGAQAGSQAEAARATI). An S1 motif domain is found at 651 to 723 (GERYLGTVVK…SRGKLSLIPV (73 aa)).

The protein belongs to the polyribonucleotide nucleotidyltransferase family. Mg(2+) is required as a cofactor.

The protein localises to the cytoplasm. It carries out the reaction RNA(n+1) + phosphate = RNA(n) + a ribonucleoside 5'-diphosphate. Its function is as follows. Involved in mRNA degradation. Catalyzes the phosphorolysis of single-stranded polyribonucleotides processively in the 3'- to 5'-direction. The polypeptide is Polyribonucleotide nucleotidyltransferase (Streptomyces griseus subsp. griseus (strain JCM 4626 / CBS 651.72 / NBRC 13350 / KCC S-0626 / ISP 5235)).